Here is a 558-residue protein sequence, read N- to C-terminus: 2-isopropylmalate synthase (558 aa).

The Pyruvate carboxyltransferase domain occupies 28 to 304; sequence PIWCSVDLRD…DPELEFSNLN (277 aa). Residues Asp37, His243, His245, and Asn279 each coordinate Mg(2+). Positions 438 to 558 are regulatory domain; it reads NRSPYYLKNY…VSALNRSKLK (121 aa).

The protein belongs to the alpha-IPM synthase/homocitrate synthase family. LeuA type 2 subfamily. In terms of assembly, homodimer. It depends on Mg(2+) as a cofactor.

Its subcellular location is the cytoplasm. The enzyme catalyses 3-methyl-2-oxobutanoate + acetyl-CoA + H2O = (2S)-2-isopropylmalate + CoA + H(+). It participates in amino-acid biosynthesis; L-leucine biosynthesis; L-leucine from 3-methyl-2-oxobutanoate: step 1/4. Functionally, catalyzes the condensation of the acetyl group of acetyl-CoA with 3-methyl-2-oxobutanoate (2-ketoisovalerate) to form 3-carboxy-3-hydroxy-4-methylpentanoate (2-isopropylmalate). The protein is 2-isopropylmalate synthase of Clostridium acetobutylicum (strain ATCC 824 / DSM 792 / JCM 1419 / IAM 19013 / LMG 5710 / NBRC 13948 / NRRL B-527 / VKM B-1787 / 2291 / W).